Reading from the N-terminus, the 575-residue chain is Manganese transporter SMF1 (575 aa).

Topologically, residues 1-70 (MVNVGPSHAA…TYVSKRQVMR (70 aa)) are extracellular. Serine 24 is modified (phosphoserine). Glycyl lysine isopeptide (Lys-Gly) (interchain with G-Cter in ubiquitin) cross-links involve residues lysine 33 and lysine 34. A helical membrane pass occupies residues 71-91 (DIFAKYLKFIGPGLMVSVAYI). At 92–108 (DPGNYSTAVDAGASNQF) the chain is on the cytoplasmic side. A helical membrane pass occupies residues 109 to 129 (SLLCIILLSNFIAIFLQCLCI). Topologically, residues 130–156 (KLGSVTGLDLSRACREYLPRWLNWTLY) are extracellular. The chain crosses the membrane as a helical span at residues 157–177 (FFAECAVIATDIAEVIGTAIA). Over 178-179 (LN) the chain is Cytoplasmic. Residues 180–200 (ILIKVPLPAGVAITVVDVFLI) traverse the membrane as a helical segment. At 201 to 218 (MFTYKPGASSIRFIRIFE) the chain is on the extracellular side. Residues 219–239 (CFVAVLVVGVCICFAIELAYI) traverse the membrane as a helical segment. The Cytoplasmic portion of the chain corresponds to 240-266 (PKSTSVKQVFRGFVPSAQMFDHNGIYT). Residues 267–287 (AISILGATVMPHSLFLGSALV) traverse the membrane as a helical segment. The Extracellular portion of the chain corresponds to 288–344 (QPRLLDYDVKHGNYTVSEEQDKVKKSKSTEEIMEEKYFNYRPTNAAIKYCMKYSMVE). Residues 345–365 (LSITLFTLALFVNCAILVVAG) traverse the membrane as a helical segment. The Cytoplasmic portion of the chain corresponds to 366–396 (STLYNSPEADGADLFTIHELLSRNLAPAAGT). Residues 397 to 417 (IFMLALLLSGQSAGVVCTMSG) traverse the membrane as a helical segment. At 418–463 (QIVSEGHINWKLQPWQRRLATRCISIIPCLVISICIGREALSKALN) the chain is on the extracellular side. Residues 464 to 484 (ASQVVLSIVLPFLVAPLIFFT) traverse the membrane as a helical segment. The Cytoplasmic portion of the chain corresponds to 485 to 543 (CKKSIMKTEITVDHTEEDSHNHQNNNDRSAGSVIEQDGSSGMEIENGKDVKIVYMANNW). The interval 498 to 517 (HTEEDSHNHQNNNDRSAGSV) is disordered. Residues 544-564 (IITVIAIIVWLFLSLLNVYAI) form a helical membrane-spanning segment. At 565–575 (VQLGMSHGDIS) the chain is on the extracellular side.

Belongs to the NRAMP family.

The protein localises to the cell membrane. It catalyses the reaction Mn(2+)(in) = Mn(2+)(out). Functionally, high-affinity manganese transporter involved in manganese uptake from the extracellular environment. Also contributes to cellular accumulation of other divalent metal ions such as cadmium, cobalt, copper, iron and nickel. The polypeptide is Manganese transporter SMF1 (SMF1) (Saccharomyces cerevisiae (strain ATCC 204508 / S288c) (Baker's yeast)).